We begin with the raw amino-acid sequence, 519 residues long: Probable cytochrome P450 6g2 (519 aa).

Cysteine 460 serves as a coordination point for heme.

The protein belongs to the cytochrome P450 family. Heme is required as a cofactor.

The protein localises to the endoplasmic reticulum membrane. It is found in the microsome membrane. Functionally, may be involved in the metabolism of insect hormones and in the breakdown of synthetic insecticides. This chain is Probable cytochrome P450 6g2 (Cyp6g2), found in Drosophila melanogaster (Fruit fly).